The primary structure comprises 659 residues: Cysteine-rich receptor-like protein kinase 5 (659 aa).

Positions methionine 1 to alanine 24 are cleaved as a signal peptide. At glutamine 25 to threonine 279 the chain is on the extracellular side. Gnk2-homologous domains are found at residues aspartate 28–isoleucine 132 and threonine 138–phenylalanine 243. N-linked (GlcNAc...) asparagine glycosylation is found at asparagine 175 and asparagine 277. Residues valine 280 to phenylalanine 300 form a helical membrane-spanning segment. The Cytoplasmic portion of the chain corresponds to serine 301–arginine 659. The region spanning phenylalanine 340 to leucine 619 is the Protein kinase domain. ATP-binding positions include leucine 346–valine 354 and lysine 368. Tyrosine 413 is modified (phosphotyrosine). Aspartate 465 acts as the Proton acceptor in catalysis. Residue threonine 505 is modified to Phosphothreonine. Tyrosine 513 carries the phosphotyrosine modification.

The protein belongs to the protein kinase superfamily. Ser/Thr protein kinase family. CRK subfamily. Interacts with CRKIP1 (KAPP), CRKIP2 and CRKIP3, three kinase-associated type 2C proteins.

It is found in the membrane. It catalyses the reaction L-seryl-[protein] + ATP = O-phospho-L-seryl-[protein] + ADP + H(+). It carries out the reaction L-threonyl-[protein] + ATP = O-phospho-L-threonyl-[protein] + ADP + H(+). In terms of biological role, involved in multiple distinct defense responses. May function as a disease resistance (R) protein. This chain is Cysteine-rich receptor-like protein kinase 5 (CRK5), found in Arabidopsis thaliana (Mouse-ear cress).